Reading from the N-terminus, the 427-residue chain is Adenylosuccinate synthetase (427 aa).

Residues 12-18 (GDEGKGK) and 40-42 (GHT) contribute to the GTP site. Residue aspartate 13 is the Proton acceptor of the active site. Positions 13 and 40 each coordinate Mg(2+). Residues 13-16 (DEGK), 38-41 (NAGH), threonine 128, arginine 142, glutamine 223, threonine 238, and arginine 302 contribute to the IMP site. Catalysis depends on histidine 41, which acts as the Proton donor. Residue 298–304 (TTTGRPR) participates in substrate binding. GTP is bound by residues arginine 304, 330–332 (SID), and 412–414 (SVG).

This sequence belongs to the adenylosuccinate synthetase family. In terms of assembly, homodimer. Mg(2+) serves as cofactor.

The protein resides in the cytoplasm. It carries out the reaction IMP + L-aspartate + GTP = N(6)-(1,2-dicarboxyethyl)-AMP + GDP + phosphate + 2 H(+). The protein operates within purine metabolism; AMP biosynthesis via de novo pathway; AMP from IMP: step 1/2. Functionally, plays an important role in the de novo pathway of purine nucleotide biosynthesis. Catalyzes the first committed step in the biosynthesis of AMP from IMP. This is Adenylosuccinate synthetase from Staphylococcus epidermidis (strain ATCC 35984 / DSM 28319 / BCRC 17069 / CCUG 31568 / BM 3577 / RP62A).